The sequence spans 311 residues: Syntaxin-111 (311 aa).

The Cytoplasmic portion of the chain corresponds to 1-284 (MNDLMTKSFM…AREHQRSSRK (284 aa)). The t-SNARE coiled-coil homology domain maps to 213–275 (VHEIQDRHDA…QGGNKELRKA (63 aa)). The helical; Anchor for type IV membrane protein transmembrane segment at 285-305 (WLCIGIIILLLLVLLVIVPIA) threads the bilayer. Residues 306–311 (TSFKRS) lie on the Vesicular side of the membrane.

It belongs to the syntaxin family. As to expression, expressed in roots and panicles.

The protein resides in the cell membrane. The protein localises to the cytoplasm. Vesicle trafficking protein that functions in the secretory pathway. The polypeptide is Syntaxin-111 (Oryza sativa subsp. japonica (Rice)).